The primary structure comprises 386 residues: Patatin-2-Kuras 3 (386 aa).

The N-terminal stretch at 1-23 (MATTKSVLVLFFMILATTSSTCA) is a signal peptide. Residues 32–229 (LSIDGGGIKG…TVGDPALLSL (198 aa)) enclose the PNPLA domain. The GXGXXG motif lies at 36–41 (GGGIKG). The GXSXG motif lies at 75–79 (GTSTG). Ser77 serves as the catalytic Nucleophile. Asn115 is a glycosylation site (N-linked (GlcNAc...) asparagine). The active-site Proton acceptor is Asp215. Positions 215-217 (DGA) match the DGA/G motif. Residues 321–384 (ENALTGTTTE…DRKKLRANKA (64 aa)) adopt a coiled-coil conformation.

It belongs to the patatin family. As to expression, tuber.

It is found in the vacuole. Its function is as follows. Probable lipolytic acyl hydrolase (LAH), an activity which is thought to be involved in the response of tubers to pathogens. The chain is Patatin-2-Kuras 3 (pat2-k3) from Solanum tuberosum (Potato).